Consider the following 390-residue polypeptide: Chorismate synthase (390 aa).

2 residues coordinate NADP(+): R39 and R45. FMN is bound by residues 132–134 (RSS), 253–254 (NA), G298, 313–317 (KPIPT), and R339.

This sequence belongs to the chorismate synthase family. In terms of assembly, homotetramer. The cofactor is FMNH2.

The catalysed reaction is 5-O-(1-carboxyvinyl)-3-phosphoshikimate = chorismate + phosphate. Its pathway is metabolic intermediate biosynthesis; chorismate biosynthesis; chorismate from D-erythrose 4-phosphate and phosphoenolpyruvate: step 7/7. Its function is as follows. Catalyzes the anti-1,4-elimination of the C-3 phosphate and the C-6 proR hydrogen from 5-enolpyruvylshikimate-3-phosphate (EPSP) to yield chorismate, which is the branch point compound that serves as the starting substrate for the three terminal pathways of aromatic amino acid biosynthesis. This reaction introduces a second double bond into the aromatic ring system. This is Chorismate synthase from Bacillus cytotoxicus (strain DSM 22905 / CIP 110041 / 391-98 / NVH 391-98).